We begin with the raw amino-acid sequence, 535 residues long: Light-independent protochlorophyllide reductase subunit B (535 aa).

D36 is a binding site for [4Fe-4S] cluster. D292 functions as the Proton donor in the catalytic mechanism. A substrate-binding site is contributed by 428–429 (GL).

Belongs to the ChlB/BchB/BchZ family. As to quaternary structure, protochlorophyllide reductase is composed of three subunits; BchL, BchN and BchB. Forms a heterotetramer of two BchB and two BchN subunits. Requires [4Fe-4S] cluster as cofactor.

It carries out the reaction chlorophyllide a + oxidized 2[4Fe-4S]-[ferredoxin] + 2 ADP + 2 phosphate = protochlorophyllide a + reduced 2[4Fe-4S]-[ferredoxin] + 2 ATP + 2 H2O. Its pathway is porphyrin-containing compound metabolism; bacteriochlorophyll biosynthesis (light-independent). Functionally, component of the dark-operative protochlorophyllide reductase (DPOR) that uses Mg-ATP and reduced ferredoxin to reduce ring D of protochlorophyllide (Pchlide) to form chlorophyllide a (Chlide). This reaction is light-independent. The NB-protein (BchN-BchB) is the catalytic component of the complex. In Pelodictyon phaeoclathratiforme (strain DSM 5477 / BU-1), this protein is Light-independent protochlorophyllide reductase subunit B.